The primary structure comprises 371 residues: Histidinol-phosphate aminotransferase (371 aa).

An N6-(pyridoxal phosphate)lysine modification is found at Lys228.

The protein belongs to the class-II pyridoxal-phosphate-dependent aminotransferase family. Histidinol-phosphate aminotransferase subfamily. The cofactor is pyridoxal 5'-phosphate.

The catalysed reaction is L-histidinol phosphate + 2-oxoglutarate = 3-(imidazol-4-yl)-2-oxopropyl phosphate + L-glutamate. The protein operates within amino-acid biosynthesis; L-histidine biosynthesis; L-histidine from 5-phospho-alpha-D-ribose 1-diphosphate: step 7/9. This is Histidinol-phosphate aminotransferase from Methanococcus maripaludis (strain C7 / ATCC BAA-1331).